A 159-amino-acid chain; its full sequence is Transcription repressor OFP6 (159 aa).

Residues 39-60 (PKRPSSTYRHCHSSISSATPSS) are disordered. The span at 51–60 (SSISSATPSS) shows a compositional bias: low complexity. The region spanning 70-129 (VEKDSDDPYLDFRQSMLQMILENQIYSKDELRELLQCFLSLNSHYHHGIIVRAFSEIWED) is the OVATE domain.

In terms of assembly, interacts with KNAT1 and KNAT7. Expressed in roots, shoots, rosette and cauline leaves, stems, flower buds and siliques.

The protein resides in the nucleus. Functionally, transcriptional repressor that regulates multiple aspects of plant growth and development through the regulation of BEL1-LIKE (BLH) and KNOX TALE (KNAT) homeodomain transcription factors. The protein is Transcription repressor OFP6 (OFP6) of Arabidopsis thaliana (Mouse-ear cress).